The following is a 231-amino-acid chain: Heptaprenylglyceryl phosphate synthase (231 aa).

Sn-glycerol 1-phosphate is bound at residue Lys12. Mg(2+) contacts are provided by Asp14 and Thr40. Residues 159–164, Gly189, and 209–210 contribute to the sn-glycerol 1-phosphate site; these read YMEYSG and GN.

This sequence belongs to the GGGP/HepGP synthase family. Group I subfamily. Homodimer. Mg(2+) is required as a cofactor.

It carries out the reaction sn-glycerol 1-phosphate + all-trans-heptaprenyl diphosphate = 3-heptaprenyl-sn-glycero-1-phosphate + diphosphate. Its pathway is membrane lipid metabolism; glycerophospholipid metabolism. Functionally, prenyltransferase that catalyzes in vivo the transfer of the heptaprenyl moiety of heptaprenyl pyrophosphate (HepPP; 35 carbon atoms) to the C3 hydroxyl of sn-glycerol-1-phosphate (G1P), producing heptaprenylglyceryl phosphate (HepGP). This reaction is an ether-bond-formation step in the biosynthesis of archaea-type G1P-based membrane lipids found in Bacillales. In Brevibacillus brevis (strain 47 / JCM 6285 / NBRC 100599), this protein is Heptaprenylglyceryl phosphate synthase.